Reading from the N-terminus, the 708-residue chain is Fatty acid oxidation complex subunit alpha (708 aa).

The tract at residues 1–190 (MDMEKTFNLT…KMGLVDDAVP (190 aa)) is enoyl-CoA hydratase. A 3-hydroxyacyl-CoA dehydrogenase region spans residues 310 to 708 (QKVNKVMVLG…MAEEGTRFFS (399 aa)).

In the N-terminal section; belongs to the enoyl-CoA hydratase/isomerase family. The protein in the central section; belongs to the 3-hydroxyacyl-CoA dehydrogenase family. As to quaternary structure, heterotetramer of two alpha chains (FadJ) and two beta chains (FadI).

It localises to the cytoplasm. The enzyme catalyses a (3S)-3-hydroxyacyl-CoA = a (2E)-enoyl-CoA + H2O. The catalysed reaction is a 4-saturated-(3S)-3-hydroxyacyl-CoA = a (3E)-enoyl-CoA + H2O. It catalyses the reaction a (3S)-3-hydroxyacyl-CoA + NAD(+) = a 3-oxoacyl-CoA + NADH + H(+). It carries out the reaction (3S)-3-hydroxybutanoyl-CoA = (3R)-3-hydroxybutanoyl-CoA. The protein operates within lipid metabolism; fatty acid beta-oxidation. Catalyzes the formation of a hydroxyacyl-CoA by addition of water on enoyl-CoA. Also exhibits 3-hydroxyacyl-CoA epimerase and 3-hydroxyacyl-CoA dehydrogenase activities. The polypeptide is Fatty acid oxidation complex subunit alpha (Shewanella halifaxensis (strain HAW-EB4)).